Here is a 208-residue protein sequence, read N- to C-terminus: Redox-sensing transcriptional repressor Rex 1 (208 aa).

Residues 15-54 (SYYMCLERLLDEGVEVVSSEELARRLDLKASQIRKDLSYF) constitute a DNA-binding region (H-T-H motif). NAD(+) is bound at residue 89–94 (GAGNIG).

The protein belongs to the transcriptional regulatory Rex family. As to quaternary structure, homodimer.

The protein localises to the cytoplasm. Modulates transcription in response to changes in cellular NADH/NAD(+) redox state. The polypeptide is Redox-sensing transcriptional repressor Rex 1 (Thermotoga maritima (strain ATCC 43589 / DSM 3109 / JCM 10099 / NBRC 100826 / MSB8)).